The chain runs to 615 residues: Chaperone protein HscA homolog (615 aa).

This sequence belongs to the heat shock protein 70 family.

Chaperone involved in the maturation of iron-sulfur cluster-containing proteins. Has a low intrinsic ATPase activity which is markedly stimulated by HscB. The chain is Chaperone protein HscA homolog from Aeromonas salmonicida (strain A449).